Here is a 72-residue protein sequence, read N- to C-terminus: SHDEPSESSEPCCDSCDCTKSIPPECHCANIRLNSCHSACKSCICTRSMPGKCRCLDTDDFCYKPCESMDKD.

7 disulfides stabilise this stretch: Cys12-Cys66, Cys13-Cys28, Cys16-Cys62, Cys18-Cys26, Cys36-Cys43, Cys40-Cys55, and Cys45-Cys53.

This sequence belongs to the Bowman-Birk serine protease inhibitor family.

The chain is Bowman-Birk type trypsin inhibitor from Vigna radiata var. radiata (Mung bean).